A 229-amino-acid chain; its full sequence is RNA chaperone ProQ (229 aa).

The segment at Glu105–Ser178 is disordered. Residues Gln117 to Arg136 show a composition bias toward basic and acidic residues. Basic residues predominate over residues Arg137–Pro146. Positions Arg147–Pro176 are enriched in basic and acidic residues.

The protein belongs to the ProQ family.

The protein localises to the cytoplasm. Its function is as follows. RNA chaperone with significant RNA binding, RNA strand exchange and RNA duplexing activities. May regulate ProP activity through an RNA-based, post-transcriptional mechanism. The sequence is that of RNA chaperone ProQ from Escherichia fergusonii (strain ATCC 35469 / DSM 13698 / CCUG 18766 / IAM 14443 / JCM 21226 / LMG 7866 / NBRC 102419 / NCTC 12128 / CDC 0568-73).